Consider the following 239-residue polypeptide: 1-(5-phosphoribosyl)-5-[(5-phosphoribosylamino)methylideneamino] imidazole-4-carboxamide isomerase (239 aa).

The active-site Proton acceptor is the aspartate 8. Aspartate 129 serves as the catalytic Proton donor.

This sequence belongs to the HisA/HisF family.

It localises to the cytoplasm. The catalysed reaction is 1-(5-phospho-beta-D-ribosyl)-5-[(5-phospho-beta-D-ribosylamino)methylideneamino]imidazole-4-carboxamide = 5-[(5-phospho-1-deoxy-D-ribulos-1-ylimino)methylamino]-1-(5-phospho-beta-D-ribosyl)imidazole-4-carboxamide. It functions in the pathway amino-acid biosynthesis; L-histidine biosynthesis; L-histidine from 5-phospho-alpha-D-ribose 1-diphosphate: step 4/9. The chain is 1-(5-phosphoribosyl)-5-[(5-phosphoribosylamino)methylideneamino] imidazole-4-carboxamide isomerase from Paramagnetospirillum magneticum (strain ATCC 700264 / AMB-1) (Magnetospirillum magneticum).